The chain runs to 734 residues: Photosystem I P700 chlorophyll a apoprotein A2 (734 aa).

Helical transmembrane passes span 46–69 (IFAS…FHVA), 135–158 (LYTG…LHLQ), 175–199 (LNHH…HVAI), 273–291 (IAHH…GHMY), 330–353 (IHFQ…QHMY), 369–395 (AALY…IFFI), 417–439 (AIIS…LYVH), and 517–535 (FLVH…LILV). Residues Cys559 and Cys568 each contribute to the [4Fe-4S] cluster site. 2 helical membrane passes run 575 to 596 (AFYL…YWHW) and 643 to 665 (LSVW…MFLI). Chlorophyll a is bound by residues His654, Met662, and Tyr670. Trp671 is a phylloquinone binding site. A helical membrane pass occupies residues 707–727 (LVGLAHFSVGYIFTYAAFLIA).

This sequence belongs to the PsaA/PsaB family. The PsaA/B heterodimer binds the P700 chlorophyll special pair and subsequent electron acceptors. PSI consists of a core antenna complex that captures photons, and an electron transfer chain that converts photonic excitation into a charge separation. The eukaryotic PSI reaction center is composed of at least 11 subunits. P700 is a chlorophyll a/chlorophyll a' dimer, A0 is one or more chlorophyll a, A1 is one or both phylloquinones and FX is a shared 4Fe-4S iron-sulfur center. is required as a cofactor.

Its subcellular location is the plastid. It is found in the chloroplast thylakoid membrane. The enzyme catalyses reduced [plastocyanin] + hnu + oxidized [2Fe-2S]-[ferredoxin] = oxidized [plastocyanin] + reduced [2Fe-2S]-[ferredoxin]. Its function is as follows. PsaA and PsaB bind P700, the primary electron donor of photosystem I (PSI), as well as the electron acceptors A0, A1 and FX. PSI is a plastocyanin-ferredoxin oxidoreductase, converting photonic excitation into a charge separation, which transfers an electron from the donor P700 chlorophyll pair to the spectroscopically characterized acceptors A0, A1, FX, FA and FB in turn. Oxidized P700 is reduced on the lumenal side of the thylakoid membrane by plastocyanin. This Dioscorea elephantipes (Elephant's foot yam) protein is Photosystem I P700 chlorophyll a apoprotein A2.